Reading from the N-terminus, the 585-residue chain is Arginine--tRNA ligase (585 aa).

Positions 127–137 (PNTNKPLHVGH) match the 'HIGH' region motif.

This sequence belongs to the class-I aminoacyl-tRNA synthetase family. In terms of assembly, monomer.

It localises to the cytoplasm. The enzyme catalyses tRNA(Arg) + L-arginine + ATP = L-arginyl-tRNA(Arg) + AMP + diphosphate. The sequence is that of Arginine--tRNA ligase from Borrelia garinii subsp. bavariensis (strain ATCC BAA-2496 / DSM 23469 / PBi) (Borreliella bavariensis).